A 494-amino-acid chain; its full sequence is Ammonium transporter Rh type C (494 aa).

At M1–L22 the chain is on the cytoplasmic side. Residues T23 to I43 traverse the membrane as a helical segment. Residues R44–Y74 lie on the Extracellular side of the membrane. N61 carries N-linked (GlcNAc...) asparagine glycosylation. The helical transmembrane segment at P75–L95 threads the bilayer. The Cytoplasmic portion of the chain corresponds to K96–S99. The chain crosses the membrane as a helical span at residues F100–M120. The Extracellular portion of the chain corresponds to Q121–K133. A helical transmembrane segment spans residues I134–A154. The Cytoplasmic segment spans residues Y155–Q166. The helical transmembrane segment at L167–N187 threads the bilayer. The Extracellular segment spans residues L188–A194. A helical membrane pass occupies residues G195–L215. Residues Y216 to D234 are Cytoplasmic-facing. The chain crosses the membrane as a helical span at residues I235 to I255. Residues T256–A265 are Extracellular-facing. Residues V266 to F286 form a helical membrane-spanning segment. Over S287 to H297 the chain is Cytoplasmic. The helical transmembrane segment at I298–S318 threads the bilayer. A topological domain (extracellular) is located at residue P319. Residues Y320 to I340 traverse the membrane as a helical segment. At S341–N358 the chain is on the cytoplasmic side. The helical transmembrane segment at L359–S379 threads the bilayer. At E380–A411 the chain is on the extracellular side. The chain crosses the membrane as a helical span at residues A412 to L432. Topologically, residues K433–S494 are cytoplasmic.

Belongs to the ammonium transporter (TC 2.A.49) family. Rh subfamily. In terms of assembly, homotrimer.

Its subcellular location is the apical cell membrane. Functionally, functions as an ammonia transporter. May play a role in the elimination of ammonia in the gill. This Oncorhynchus mykiss (Rainbow trout) protein is Ammonium transporter Rh type C (rhcg).